The sequence spans 362 residues: Probable RNA methyltransferase Tbd_1951 (362 aa).

Glu-89 acts as the Proton acceptor in catalysis. The Radical SAM core domain occupies 92 to 318 (LLPRDGVCVS…AKLRHSAGQD (227 aa)). The cysteines at positions 99 and 323 are disulfide-linked. Residues Cys-106, Cys-110, and Cys-113 each contribute to the [4Fe-4S] cluster site. Residues 151 to 152 (GE), Ser-181, 204 to 206 (SLH), and Asn-280 each bind S-adenosyl-L-methionine. The S-methylcysteine intermediate role is filled by Cys-323. A disordered region spans residues 342 to 362 (LPSAETPAASPKAAASIGFPG). Residues 343–362 (PSAETPAASPKAAASIGFPG) show a composition bias toward low complexity.

This sequence belongs to the radical SAM superfamily. RlmN family. It depends on [4Fe-4S] cluster as a cofactor.

It localises to the cytoplasm. The sequence is that of Probable RNA methyltransferase Tbd_1951 from Thiobacillus denitrificans (strain ATCC 25259 / T1).